Consider the following 1885-residue polypeptide: MATRGNVPAHMQASLPALPAHLQSDTHITAHLASRFHVSLPTARLSSQGLICLNTFTSSTRGPNGDKEGSAMGEAEDLARRAWARLGNRAEDQAFVFFGESGSGKTTVRSHLLSSFLSFSSTPLSSKLSLAAFVFDTLTTTKTTTTQTASKAGLFYELQYDASSNNPTLIGGKLLDHRLERSRISHVPTGERSFHVLYYLLAGTSAAEKSHLGLDGHVNITTAGTGLSRSASVSHKRWRYLGHPTQMKVGINDAEGFQHFKNALRKLEFPRTEIAEICQVLAAILHIGQLEFGTGQATLTAAEESGGYSHEGGETVTVVKNRDTLAIVAAFLGLGVQDLEESLRYKTRTIHRERVTVMLDTKGARENADELATTLYSLLVTYIIESINQRVCAAEDSVANTISIVDFPGFADHSSTGSVLDQLLNNAANESLYNTCLHSIFEKTAEMLESEEVSVPATSYFDNSDAVRGLLKHGNGLLAILDDQTRRGRTDVQFLESLRKRFENKNKAITVGSATSTMPGSNFATTNLAASFTVRHYAGEVDYPVHSLVEENGDVVSGDLMNMIKATKSDFVANLFGQEALNTVSHPAEKTAIVQAQVSSKPLRMPSVSRKKHDQLRRMASRRADRSPAPQEEEPLPGTEEAKVRRTKPTATGLTQGAAAQFLSALDNITKSLTAPNVNNYFVFCLKPNDRRIANQFDSKCVRQQVQMFGIAEISQRLRTADFTIFLPFGEFLGLTDADGGVVGSDREKAQLVLDSKHWPPNEARIGNTGVFLSERCWASIALTGSQAAAYFGGDIGSPSRPDTPGHNPFSDSKARLVGSADGTPGSFYGDEAKGGGYFGSRELDAKSDAGASAFHSGDMFRNLETKEELAEKGNKKKVEEVDVVPVSSSRKRWLAIVYFLTWYLPDFAIKWIGGMKRKDVRTAWREKFAINLLIWLSCGLVVFFIIVFPELICPKQNVYSAAELSAHDGKGKHSAYVAIRGQVFDLGAFMPNHYPKIIPQSSLKKYAGVDATGLFPVQVSALCQGKDGRVDPTVQLDYTATNISGTAAVISSTDANRKYHDFRYFTNDSRPDWFYEQMIMLKANYRKGSIGYTPQYVKTLAKKSKSIAILNDRVYDFTTYNEGGRSVRAPPGEEVPSGVDTDFMDSLVVDLFTQRAGHDVTKYWNALPLDPGLRSRMQLCLDNLFFVGVTDTRNSPRCLFARYILLAVSILLCSVIGFKFFAALQFGGKNVPENLDKFVICQVPAYTEDEDSLRRAIDSAARMRYDDKRKLLIVVCDGMIIGQGNDRPTPRIVLDILGVSETVDPEPLSFESLGEGMKQHNMGKVYSGLYEVQGHIVPFMVVVKVGKPSEVSRPGNRGKRDSQMVIMRFLHRVHYNLPMSPLELEMHHQIRNIIGVNPTFYEFMLQIDADTVVAPDSATRMVSAFLRDTRLIGVCGETSLSNAKSSFITMMQVYEYYISHNLTKAFESLFGSVTCLPGCFTMYRIRAAETGKPLFVSKEIIQDYSEIRVDTLHMKNLLHLGEDRYLTTLLLKYHSKYKTKYIFHAHAWTIAPDSWKVFMSQRRRWINSTVHNLIELIPLQQLCGFCCFSMRFVVFLDLLSTVVAPVTVAYIAYLIVLLATESDVVPLTAFILLGAIYGLQAIIFILRRKWEMIGWMIVYILAMPVFSLGLPLYAFWHMDDFSWGNTRLVRGEHGKQILLSDEGKFGPDSIPKKKWEEYQAELWDAQTQRDDARSELSGYSYGTKSYLPTGSVYGGGYNDTQHLMMAPSRSASQLDMHPTPMYGGGGGHNQSRMSLAPSEMLGSQSNLMMPSGRSVADMEMSDLTGLPTDDMLLNEIRDILRTADLMTVTKKGIKQELERRFNVNLDMKRAYIGSATEAILSGQL.

In terms of domain architecture, Myosin motor spans 1–789 (MATRGNVPAH…SIALTGSQAA (789 aa)). 99–106 (GESGSGKT) contacts ATP. Asparagine 219 and asparagine 429 each carry an N-linked (GlcNAc...) asparagine glycan. Residues 601–649 (KPLRMPSVSRKKHDQLRRMASRRADRSPAPQEEEPLPGTEEAKVRRTKP) are disordered. Over residues 609-621 (SRKKHDQLRRMAS) the composition is skewed to basic residues. The interval 666–690 (LDNITKSLTAPNVNNYFVFCLKPND) is actin-binding. N-linked (GlcNAc...) asparagine glycosylation is present at asparagine 668. The disordered stretch occupies residues 794-817 (GDIGSPSRPDTPGHNPFSDSKARL). The next 2 membrane-spanning stretches (helical) occupy residues 894 to 914 (WLAI…KWIG) and 929 to 949 (FAIN…IIVF). A Cytochrome b5 heme-binding domain is found at 957-1016 (QNVYSAAELSAHDGKGKHSAYVAIRGQVFDLGAFMPNHYPKIIPQSSLKKYAGVDATGLF). N-linked (GlcNAc...) asparagine glycans are attached at residues asparagine 1043 and asparagine 1068. Residues 1205–1225 (ILLAVSILLCSVIGFKFFAAL) traverse the membrane as a helical segment. Residues asparagine 1462 and asparagine 1568 are each glycosylated (N-linked (GlcNAc...) asparagine). The next 3 helical transmembrane spans lie at 1599-1619 (LLST…IVLL), 1626-1646 (VPLT…IIFI), and 1653-1673 (MIGW…GLPL). Asparagine 1759 and asparagine 1790 each carry an N-linked (GlcNAc...) asparagine glycan. Residues 1827-1882 (LPTDDMLLNEIRDILRTADLMTVTKKGIKQELERRFNVNLDMKRAYIGSATEAILS) enclose the DEK-C domain.

The protein in the N-terminal section; belongs to the TRAFAC class myosin-kinesin ATPase superfamily. Myosin family. In the C-terminal section; belongs to the chitin synthase family. Class V subfamily. In terms of processing, maximal activity requires trypsin activation, suggesting a zymogenic nature.

It is found in the cell membrane. Its subcellular location is the membrane. The enzyme catalyses [(1-&gt;4)-N-acetyl-beta-D-glucosaminyl](n) + UDP-N-acetyl-alpha-D-glucosamine = [(1-&gt;4)-N-acetyl-beta-D-glucosaminyl](n+1) + UDP + H(+). Its function is as follows. Polymerizes chitin, a structural polymer of the cell wall and septum, by transferring the sugar moiety of UDP-GlcNAc to the non-reducing end of the growing chitin polymer. CHS5 is required for the sustained growth at 37 degrees Celsius and is of critical importance for virulence. Especially important at infection temperatures for maintaining the cell wall integrity of developing yeast buds, elongating tips of hyphae, and random sites of expansion in sclerotic forms. This chain is Chitin synthase 5, found in Exophiala dermatitidis (strain ATCC 34100 / CBS 525.76 / NIH/UT8656) (Black yeast).